A 264-amino-acid polypeptide reads, in one-letter code: ATP synthase subunit a (264 aa).

5 helical membrane passes run 39–59 (LDTLIISVVLGALFILIFYIV), 97–117 (VAPLALTIFIWVFLMNFMDLV), 139–159 (TADPTLTFAMSITVFVLVIFY), 205–225 (LFGNLFAGELIFILIALLPWW), and 239–259 (LLVITVQAFIFMMLTVVYISL).

It belongs to the ATPase A chain family. F-type ATPases have 2 components, CF(1) - the catalytic core - and CF(0) - the membrane proton channel. CF(1) has five subunits: alpha(3), beta(3), gamma(1), delta(1), epsilon(1). CF(0) has three main subunits: a(1), b(2) and c(9-12). The alpha and beta chains form an alternating ring which encloses part of the gamma chain. CF(1) is attached to CF(0) by a central stalk formed by the gamma and epsilon chains, while a peripheral stalk is formed by the delta and b chains.

It localises to the cell inner membrane. Functionally, key component of the proton channel; it plays a direct role in the translocation of protons across the membrane. This is ATP synthase subunit a from Coxiella burnetii (strain CbuK_Q154) (Coxiella burnetii (strain Q154)).